The following is a 275-amino-acid chain: N-(5'-phosphoribosyl)anthranilate isomerase 1, chloroplastic (275 aa).

A chloroplast-targeting transit peptide spans 1 to 32 (MSTGISTDLHVHFGALNFSKTYKSGLSNRTVS).

It belongs to the TrpF family. Expressed in roots and shoots.

The protein resides in the plastid. The protein localises to the chloroplast. It catalyses the reaction N-(5-phospho-beta-D-ribosyl)anthranilate = 1-(2-carboxyphenylamino)-1-deoxy-D-ribulose 5-phosphate. Its pathway is amino-acid biosynthesis; L-tryptophan biosynthesis; L-tryptophan from chorismate: step 3/5. Functionally, catalyzes the conversion of 5-phosphoribosylanthranilate to l-(O-carboxyphenylamino)-l-deoxyribulose-5-phosphate, which is the third step of the tryptophan biosynthetic pathway. In Arabidopsis thaliana (Mouse-ear cress), this protein is N-(5'-phosphoribosyl)anthranilate isomerase 1, chloroplastic (PAI1).